The following is a 60-amino-acid chain: UPF0434 protein PC1_1771 (60 aa).

It belongs to the UPF0434 family.

The sequence is that of UPF0434 protein PC1_1771 from Pectobacterium carotovorum subsp. carotovorum (strain PC1).